A 1499-amino-acid polypeptide reads, in one-letter code: Phospholipid-transporting ATPase VA (1499 aa).

A disordered region spans residues M1 to R53. Over M1–P86 the chain is Cytoplasmic. A compositionally biased stretch (basic residues) spans G15–T26. Residues A87–F106 traverse the membrane as a helical segment. At Q107–L110 the chain is on the exoplasmic loop side. The helical transmembrane segment at A111–W128 threads the bilayer. Residues E129–D309 lie on the Cytoplasmic side of the membrane. A helical membrane pass occupies residues V310–I332. At W333–F362 the chain is on the exoplasmic loop side. Residues L363 to V384 traverse the membrane as a helical segment. Topologically, residues K385–N1087 are cytoplasmic. D427 acts as the 4-aspartylphosphate intermediate in catalysis. D427, K428, and T429 together coordinate ATP. D427 is a binding site for Mg(2+). T429 lines the Mg(2+) pocket. The interval A464–I531 is disordered. S466 carries the phosphoserine modification. The span at S477 to T499 shows a compositional bias: polar residues. ATP contacts are provided by E700, F742, K766, R809, T889, G890, D891, R1005, and K1011. D1031 contributes to the Mg(2+) binding site. ATP is bound by residues N1034 and D1035. Mg(2+) is bound at residue D1035. Residues M1088–F1108 traverse the membrane as a helical segment. Residues F1109–D1119 lie on the Exoplasmic loop side of the membrane. The helical transmembrane segment at Q1120–V1140 threads the bilayer. Topologically, residues L1141 to T1170 are cytoplasmic. The chain crosses the membrane as a helical span at residues F1171–A1192. The Exoplasmic loop portion of the chain corresponds to Y1193–D1199. Residues L1200–E1222 form a helical membrane-spanning segment. Over T1223 to W1228 the chain is Cytoplasmic. A helical membrane pass occupies residues L1229 to N1249. Topologically, residues A1250–A1267 are exoplasmic loop. A helical transmembrane segment spans residues L1268–F1292. Topologically, residues R1293–Q1499 are cytoplasmic. Disordered stretches follow at residues T1311–H1356 and D1464–Q1499. Basic and acidic residues predominate over residues L1330 to S1340. Polar residues predominate over residues G1341–H1356.

It belongs to the cation transport ATPase (P-type) (TC 3.A.3) family. Type IV subfamily. As to quaternary structure, component of a P4-ATPase flippase complex which consists of a catalytic alpha subunit ATP10A and an accessory beta subunit TMEM30A. It depends on Mg(2+) as a cofactor. Post-translationally, autophosphorylated at the conserved aspartate of the P-type ATPase signature sequence. Widely expressed, with highest levels in kidney, followed by lung, brain, prostate, testis, ovary and small intestine.

It localises to the cell membrane. It is found in the endoplasmic reticulum membrane. It catalyses the reaction ATP + H2O + phospholipidSide 1 = ADP + phosphate + phospholipidSide 2.. It carries out the reaction a 1,2-diacyl-sn-glycero-3-phosphocholine(out) + ATP + H2O = a 1,2-diacyl-sn-glycero-3-phosphocholine(in) + ADP + phosphate + H(+). The enzyme catalyses a beta-D-glucosyl-(1&lt;-&gt;1')-N-acylsphing-4-enine(out) + ATP + H2O = a beta-D-glucosyl-(1&lt;-&gt;1')-N-acylsphing-4-enine(in) + ADP + phosphate + H(+). Inhibited under hypotonic conditions. Its function is as follows. Catalytic component of P4-ATPase flippase complex, which catalyzes the hydrolysis of ATP coupled to the transport of phosphatidylcholine (PC) from the outer to the inner leaflet of the plasma membrane. Initiates inward plasma membrane bending and recruitment of Bin/amphiphysin/Rvs (BAR) domain-containing proteins involved in membrane tubulation and cell trafficking. Facilitates ITGB1/beta1 integrin endocytosis, delaying cell adhesion and cell spreading on extracellular matrix. Has low flippase activity toward glucosylceramide (GlcCer). The protein is Phospholipid-transporting ATPase VA of Homo sapiens (Human).